A 64-amino-acid chain; its full sequence is uncharacterized protein (64 aa).

The next 2 membrane-spanning stretches (helical) occupy residues 4 to 24 and 35 to 55; these read IYQYFSLLSFTFSLYFGWLAY and MYLNVSYCALFLSVMVFTFGM.

It localises to the cell membrane. This is an uncharacterized protein from Bacillus subtilis (strain 168).